A 370-amino-acid polypeptide reads, in one-letter code: MIASIVFFIVLVDGVATGSPNALVTDFDCRPGMKHCGVCQQLISGSTGANALCSYKGVGDFIVNNFSMGPVDWLWPSTAPSYAVVSESWGCVDDGAAFCDTTGNFRDHRGRVAREGRDGLGTVLIRPAGNGGPIDDCGADGFTQAIGTVVTTVTDYTRSERCAAVLVTVPPPNETVWYDGKCGFIPSSSSAAPPILGNMLLALIRAHPTLTLRMIQRILVRAAKPVTVTGWRGRGWWLNRVTDRWTHRNFGFGEVSPSRLEIEARRELSTSRAPVAWSTLDTCDLSEVEWVRVRLGIAPAVFRGGVTVEISSPSGTIIEILGKRPLDFSRDEFEGEFVTPFWGEPGRGKWTVSCTGGVILTTEGTCHGIR.

A signal peptide spans 1–17; the sequence is MIASIVFFIVLVDGVAT. Active-site charge relay system residues include D13, H35, and S190. In terms of domain architecture, Peptidase S8 spans 18–261; the sequence is GSPNALVTDF…FGEVSPSRLE (244 aa). The region spanning 240–370 is the P/Homo B domain; it reads RVTDRWTHRN…TTEGTCHGIR (131 aa).

Belongs to the peptidase S8 family.

This is Subtilisin-like protease (ORF47) from Ictalurid herpesvirus 1 (strain Auburn) (IcHV-1).